Here is a 523-residue protein sequence, read N- to C-terminus: GMP synthase [glutamine-hydrolyzing] (523 aa).

The Glutamine amidotransferase type-1 domain occupies 18–208 (KILIVDFGGQ…LYNVCGAKGD (191 aa)). Cys95 acts as the Nucleophile in catalysis. Residues His182 and Glu184 contribute to the active site. The region spanning 209-398 (WNMKSFLAEA…LGLPDYLVHR (190 aa)) is the GMPS ATP-PPase domain. Residue 236 to 242 (SGGVDSS) coordinates ATP.

As to quaternary structure, homodimer.

It catalyses the reaction XMP + L-glutamine + ATP + H2O = GMP + L-glutamate + AMP + diphosphate + 2 H(+). It participates in purine metabolism; GMP biosynthesis; GMP from XMP (L-Gln route): step 1/1. Functionally, catalyzes the synthesis of GMP from XMP. This chain is GMP synthase [glutamine-hydrolyzing], found in Treponema denticola (strain ATCC 35405 / DSM 14222 / CIP 103919 / JCM 8153 / KCTC 15104).